The chain runs to 601 residues: Glutathione-regulated potassium-efflux system protein KefB (601 aa).

The next 13 helical transmembrane spans lie at 4 to 24 (ADLL…VPLA), 29 to 49 (IGAV…GLGF), 55 to 75 (EILH…GLEL), 87 to 107 (IFGV…GLLM), 111 to 131 (FLWQ…TAMA), 152 to 172 (VLLF…LLAG), 177 to 197 (HFDW…LIGG), 207 to 227 (FIAA…LVLS), 230 to 250 (LFMD…GVLL), 262 to 282 (AIDP…GMSL), 284 to 304 (LGVL…LVVI), 324 to 344 (MQFA…FSTA), and 356 to 376 (ALLL…MKGI). Residues 400–519 (KPQVIVVGFG…AGVTQFSRET (120 aa)) form the RCK N-terminal domain.

The protein belongs to the monovalent cation:proton antiporter 2 (CPA2) transporter (TC 2.A.37) family. KefB subfamily. Interacts with the regulatory subunit KefG.

It is found in the cell inner membrane. In terms of biological role, pore-forming subunit of a potassium efflux system that confers protection against electrophiles. Catalyzes K(+)/H(+) antiport. This chain is Glutathione-regulated potassium-efflux system protein KefB, found in Salmonella enteritidis PT4 (strain P125109).